Consider the following 416-residue polypeptide: Serine/threonine transporter SstT (416 aa).

Helical transmembrane passes span 14–34 (GSIV…ALLS), 43–63 (FLGT…VFVL), 82–102 (VLVL…VASF), 141–161 (ALAT…GVAL), 192–212 (IGVF…ALMG), 220–240 (LLGS…FLAI), 298–318 (MAGA…TLGV), 339–359 (ASGV…LFGI), and 363–383 (VAMQ…SAET).

This sequence belongs to the dicarboxylate/amino acid:cation symporter (DAACS) (TC 2.A.23) family.

The protein localises to the cell inner membrane. The enzyme catalyses L-serine(in) + Na(+)(in) = L-serine(out) + Na(+)(out). The catalysed reaction is L-threonine(in) + Na(+)(in) = L-threonine(out) + Na(+)(out). Functionally, involved in the import of serine and threonine into the cell, with the concomitant import of sodium (symport system). This Laribacter hongkongensis (strain HLHK9) protein is Serine/threonine transporter SstT.